The chain runs to 262 residues: Type III pantothenate kinase (262 aa).

6–13 (DVGNTNAV) contacts ATP. Residues tyrosine 100 and 107–110 (GADR) each bind substrate. The Proton acceptor role is filled by aspartate 109. Residue aspartate 129 coordinates K(+). An ATP-binding site is contributed by threonine 132. Threonine 184 is a substrate binding site.

The protein belongs to the type III pantothenate kinase family. As to quaternary structure, homodimer. The cofactor is NH4(+). Requires K(+) as cofactor.

It localises to the cytoplasm. The catalysed reaction is (R)-pantothenate + ATP = (R)-4'-phosphopantothenate + ADP + H(+). The protein operates within cofactor biosynthesis; coenzyme A biosynthesis; CoA from (R)-pantothenate: step 1/5. Functionally, catalyzes the phosphorylation of pantothenate (Pan), the first step in CoA biosynthesis. This is Type III pantothenate kinase from Bacillus cereus (strain G9842).